The primary structure comprises 281 residues: Ermin (281 aa).

Composition is skewed to polar residues over residues 1–12 (MTDTPETLSGTE), 21–31 (NGQQPSSQTRQ), and 135–147 (AQQQ…DAST). 3 disordered regions span residues 1 to 80 (MTDT…KILN), 110 to 147 (REGH…DAST), and 167 to 248 (KCDE…GDIA). Residues 169–197 (DEEEEEEEEVWNEEINEEDVDECAEEEDE) show a composition bias toward acidic residues. Basic and acidic residues predominate over residues 198–223 (VRVIEFKRKHREGSPLKEESLAREDS). Ser211, Ser223, Ser227, and Ser230 each carry phosphoserine. The residue at position 234 (Thr234) is a Phosphothreonine. Positions 262–281 (KIRKGNTKQRIDEFESMMHL) are binds actin.

In terms of assembly, binds actin. In terms of tissue distribution, brain and spinal cord. Exclusively expressed by the oligodendrocytes. Appears at a late stage during myelination, and in the mature nerves, it is localized to the outer cytoplasmic lip of the myelin sheath and the paranodal loops.

It is found in the cytoplasm. It localises to the cytoskeleton. Plays a role in cytoskeletal rearrangements during the late wrapping and/or compaction phases of myelinogenesis as well as in maintenance and stability of myelin sheath in the adult. May play an important role in late-stage oligodendroglia maturation, myelin/Ranvier node formation during CNS development, and in the maintenance and plasticity of related structures in the mature CNS. The chain is Ermin (Ermn) from Mus musculus (Mouse).